Consider the following 456-residue polypeptide: Bifunctional protein GlmU (456 aa).

The segment at 1-229 is pyrophosphorylase; it reads MLNNAMSVVI…LSEVEGVNNR (229 aa). UDP-N-acetyl-alpha-D-glucosamine contacts are provided by residues 11-14, lysine 25, glutamine 76, 81-82, 103-105, glycine 140, glutamate 154, asparagine 169, and asparagine 227; these read LAAG, GT, and YGD. A Mg(2+)-binding site is contributed by aspartate 105. Mg(2+) is bound at residue asparagine 227. The tract at residues 230–250 is linker; the sequence is LQLSRLERVYQSEQAEKLLLA. Positions 251–456 are N-acetyltransferase; it reads GVMLRDPARF…EGWRRPVKKK (206 aa). UDP-N-acetyl-alpha-D-glucosamine contacts are provided by arginine 333 and lysine 351. Histidine 363 acts as the Proton acceptor in catalysis. UDP-N-acetyl-alpha-D-glucosamine-binding residues include tyrosine 366 and asparagine 377. Acetyl-CoA contacts are provided by residues alanine 380, 386–387, serine 405, alanine 423, and arginine 440; that span reads NY.

In the N-terminal section; belongs to the N-acetylglucosamine-1-phosphate uridyltransferase family. The protein in the C-terminal section; belongs to the transferase hexapeptide repeat family. In terms of assembly, homotrimer. It depends on Mg(2+) as a cofactor.

It localises to the cytoplasm. It catalyses the reaction alpha-D-glucosamine 1-phosphate + acetyl-CoA = N-acetyl-alpha-D-glucosamine 1-phosphate + CoA + H(+). It carries out the reaction N-acetyl-alpha-D-glucosamine 1-phosphate + UTP + H(+) = UDP-N-acetyl-alpha-D-glucosamine + diphosphate. Its pathway is nucleotide-sugar biosynthesis; UDP-N-acetyl-alpha-D-glucosamine biosynthesis; N-acetyl-alpha-D-glucosamine 1-phosphate from alpha-D-glucosamine 6-phosphate (route II): step 2/2. It participates in nucleotide-sugar biosynthesis; UDP-N-acetyl-alpha-D-glucosamine biosynthesis; UDP-N-acetyl-alpha-D-glucosamine from N-acetyl-alpha-D-glucosamine 1-phosphate: step 1/1. It functions in the pathway bacterial outer membrane biogenesis; LPS lipid A biosynthesis. In terms of biological role, catalyzes the last two sequential reactions in the de novo biosynthetic pathway for UDP-N-acetylglucosamine (UDP-GlcNAc). The C-terminal domain catalyzes the transfer of acetyl group from acetyl coenzyme A to glucosamine-1-phosphate (GlcN-1-P) to produce N-acetylglucosamine-1-phosphate (GlcNAc-1-P), which is converted into UDP-GlcNAc by the transfer of uridine 5-monophosphate (from uridine 5-triphosphate), a reaction catalyzed by the N-terminal domain. In Escherichia coli (strain 55989 / EAEC), this protein is Bifunctional protein GlmU.